The primary structure comprises 504 residues: Maturase K (504 aa).

Belongs to the intron maturase 2 family. MatK subfamily.

It localises to the plastid. The protein resides in the chloroplast. In terms of biological role, usually encoded in the trnK tRNA gene intron. Probably assists in splicing its own and other chloroplast group II introns. This Hamamelis mollis (Chinese witch hazel) protein is Maturase K.